Consider the following 141-residue polypeptide: Putative pre-16S rRNA nuclease (141 aa).

The protein belongs to the YqgF nuclease family.

The protein resides in the cytoplasm. Functionally, could be a nuclease involved in processing of the 5'-end of pre-16S rRNA. This is Putative pre-16S rRNA nuclease from Natranaerobius thermophilus (strain ATCC BAA-1301 / DSM 18059 / JW/NM-WN-LF).